The sequence spans 162 residues: Glutathione peroxidase-like peroxiredoxin GPX5 (162 aa).

Cys38 bears the S-selanylcysteine mark. Asn87 is a catalytic residue.

Belongs to the glutathione peroxidase family. In terms of processing, cys-87 is S-selanylated when selenium levels are high. S-selanylation may increase or be important for glutathione peroxidase activity.

Its subcellular location is the cytoplasm. The enzyme catalyses 2 glutathione + H2O2 = glutathione disulfide + 2 H2O. It carries out the reaction a hydroperoxide + [thioredoxin]-dithiol = an alcohol + [thioredoxin]-disulfide + H2O. Its function is as follows. Has thioredoxin peroxidase activity. May also have glutathione peroxidase activity, although this activity is controversial. Protects cells against reactive oxygen species, which may include photooxidative stress, hydrogen peroxide and organic hydroperoxides. The chain is Glutathione peroxidase-like peroxiredoxin GPX5 from Chlamydomonas reinhardtii (Chlamydomonas smithii).